Consider the following 118-residue polypeptide: Small ribosomal subunit protein uS13 (118 aa).

Residues 93 to 118 (KGLPVRGQRTKTNARTRKGPRKPIRK) are disordered.

It belongs to the universal ribosomal protein uS13 family. Part of the 30S ribosomal subunit. Forms a loose heterodimer with protein S19. Forms two bridges to the 50S subunit in the 70S ribosome.

In terms of biological role, located at the top of the head of the 30S subunit, it contacts several helices of the 16S rRNA. In the 70S ribosome it contacts the 23S rRNA (bridge B1a) and protein L5 of the 50S subunit (bridge B1b), connecting the 2 subunits; these bridges are implicated in subunit movement. Contacts the tRNAs in the A and P-sites. In Ectopseudomonas mendocina (strain ymp) (Pseudomonas mendocina), this protein is Small ribosomal subunit protein uS13.